Here is a 660-residue protein sequence, read N- to C-terminus: Bifunctional polymyxin resistance protein ArnA (660 aa).

A formyltransferase ArnAFT region spans residues 1–304; it reads MKTVVFAYHD…TLGLVQGSRL (304 aa). 86–88 is a binding site for (6R)-10-formyltetrahydrofolate; sequence HLI. Residue H104 is the Proton donor; for formyltransferase activity of the active site. (6R)-10-formyltetrahydrofolate-binding positions include R114 and 136–140; that span reads VKRAD. A dehydrogenase ArnADH region spans residues 314-660; that stretch reads RRTRVLILGV…RTVDLTDKPL (347 aa). Residues D347 and 368–369 contribute to the NAD(+) site; that span reads DI. Residues A393, Y398, and 432–433 contribute to the UDP-alpha-D-glucuronate site; that span reads TS. E434 functions as the Proton acceptor; for decarboxylase activity in the catalytic mechanism. UDP-alpha-D-glucuronate-binding positions include R460, N492, 526-535, and Y613; that span reads KLIDGGKQKR. The Proton donor; for decarboxylase activity role is filled by R619.

In the N-terminal section; belongs to the Fmt family. UDP-L-Ara4N formyltransferase subfamily. It in the C-terminal section; belongs to the NAD(P)-dependent epimerase/dehydratase family. UDP-glucuronic acid decarboxylase subfamily. In terms of assembly, homohexamer, formed by a dimer of trimers.

It catalyses the reaction UDP-alpha-D-glucuronate + NAD(+) = UDP-beta-L-threo-pentopyranos-4-ulose + CO2 + NADH. The catalysed reaction is UDP-4-amino-4-deoxy-beta-L-arabinose + (6R)-10-formyltetrahydrofolate = UDP-4-deoxy-4-formamido-beta-L-arabinose + (6S)-5,6,7,8-tetrahydrofolate + H(+). The protein operates within nucleotide-sugar biosynthesis; UDP-4-deoxy-4-formamido-beta-L-arabinose biosynthesis; UDP-4-deoxy-4-formamido-beta-L-arabinose from UDP-alpha-D-glucuronate: step 1/3. It functions in the pathway nucleotide-sugar biosynthesis; UDP-4-deoxy-4-formamido-beta-L-arabinose biosynthesis; UDP-4-deoxy-4-formamido-beta-L-arabinose from UDP-alpha-D-glucuronate: step 3/3. It participates in bacterial outer membrane biogenesis; lipopolysaccharide biosynthesis. Functionally, bifunctional enzyme that catalyzes the oxidative decarboxylation of UDP-glucuronic acid (UDP-GlcUA) to UDP-4-keto-arabinose (UDP-Ara4O) and the addition of a formyl group to UDP-4-amino-4-deoxy-L-arabinose (UDP-L-Ara4N) to form UDP-L-4-formamido-arabinose (UDP-L-Ara4FN). The modified arabinose is attached to lipid A and is required for resistance to polymyxin and cationic antimicrobial peptides. This Escherichia coli O6:K15:H31 (strain 536 / UPEC) protein is Bifunctional polymyxin resistance protein ArnA.